The chain runs to 419 residues: Putative zinc metalloprotease SPy_1963/M5005_Spy1674 (419 aa).

Zn(2+) is bound at residue His-18. The active site involves Glu-19. Residue His-22 participates in Zn(2+) binding. The next 4 helical transmembrane spans lie at 169-191 (LITN…ILLV), 301-323 (LAWS…FSLN), 343-365 (LESV…LIPI), and 392-411 (AYIT…AVTW). Residues 175–274 (GPMNNFILGI…LKTVAVKPQK (100 aa)) enclose the PDZ domain.

It belongs to the peptidase M50B family. The cofactor is Zn(2+).

The protein resides in the cell membrane. The polypeptide is Putative zinc metalloprotease SPy_1963/M5005_Spy1674 (Streptococcus pyogenes serotype M1).